We begin with the raw amino-acid sequence, 520 residues long: Cholesterol side-chain cleavage enzyme, mitochondrial (520 aa).

Residues 1–39 (MLARGLPFRSALVKACPPLLNTGREGWGHHRVGTGEGAG) constitute a mitochondrion transit peptide. A disordered region spans residues 27–47 (WGHHRVGTGEGAGISTRTPRP). C461 provides a ligand contact to heme.

The protein belongs to the cytochrome P450 family. As to quaternary structure, interacts with FDX1/adrenodoxin. The cofactor is heme.

It localises to the mitochondrion inner membrane. It catalyses the reaction 6 reduced [adrenodoxin] + cholesterol + 3 O2 + 6 H(+) = 4-methylpentanal + pregnenolone + 6 oxidized [adrenodoxin] + 4 H2O. The enzyme catalyses 2 reduced [adrenodoxin] + cholesterol + O2 + 2 H(+) = (22R)-hydroxycholesterol + 2 oxidized [adrenodoxin] + H2O. It carries out the reaction (22R)-hydroxycholesterol + 2 reduced [adrenodoxin] + O2 + 2 H(+) = (20R,22R)-20,22-dihydroxycholesterol + 2 oxidized [adrenodoxin] + H2O. The catalysed reaction is (20R,22R)-20,22-dihydroxycholesterol + 2 reduced [adrenodoxin] + O2 + 2 H(+) = 4-methylpentanal + pregnenolone + 2 oxidized [adrenodoxin] + 2 H2O. It participates in lipid metabolism; C21-steroid hormone metabolism. The protein operates within steroid metabolism; cholesterol metabolism. Functionally, a cytochrome P450 monooxygenase that catalyzes the side-chain hydroxylation and cleavage of cholesterol to pregnenolone, the precursor of most steroid hormones. Catalyzes three sequential oxidation reactions of cholesterol, namely the hydroxylation at C22 followed with the hydroxylation at C20 to yield 20R,22R-hydroxycholesterol that is further cleaved between C20 and C22 to yield the C21-steroid pregnenolone and 4-methylpentanal. Mechanistically, uses molecular oxygen inserting one oxygen atom into a substrate and reducing the second into a water molecule. Two electrons are provided by NADPH via a two-protein mitochondrial transfer system comprising flavoprotein FDXR (adrenodoxin/ferredoxin reductase) and nonheme iron-sulfur protein FDX1 or FDX2 (adrenodoxin/ferredoxin). The protein is Cholesterol side-chain cleavage enzyme, mitochondrial of Ovis aries (Sheep).